Here is a 375-residue protein sequence, read N- to C-terminus: Cytochrome P450 monooxygenase ACRTS1 (375 aa).

Cys-321 contributes to the heme binding site.

It belongs to the cytochrome P450 family. Heme is required as a cofactor.

The protein operates within mycotoxin biosynthesis. Functionally, cytochrome P450 monooxygenase; part of the gene cluster that mediates the biosynthesis of the host-selective toxins (HSTs) ACR-toxins responsible for brown spot of rough lemon disease by the rough lemon pathotype. ACR-toxins cause uncoupling of mitochondrial oxidative-phosphorylation similar to that of classic protonophore. The structure of the major form of ACR-toxin (ACR-toxin I) consists of an alpha-dihydropyrone ring in a 19-carbon polyalcohol, a typical polyketide structure. Minor toxins were characterized as having a pyrone ring with polyalcohol side chains different in length and showing weaker toxicity. The highly reducing polyketide synthase ACRTS2 has all necessary enzymatic domains for multiple cycles of condensation and beta-keto processing. The cytochrome P450 monooxygenase ACRTS1 has also been shown to be essential for ACR-toxin biosynthesis, however its exact role in the pathway has not been elucidated yet. This chain is Cytochrome P450 monooxygenase ACRTS1, found in Alternaria alternata (Alternaria rot fungus).